The primary structure comprises 565 residues: Periplasmic trehalase (565 aa).

The N-terminal stretch at 1-30 (MKSPAPSRPQKMALIPACIFLYFAALSVQA) is a signal peptide. Substrate-binding positions include arginine 152, 159 to 160 (WD), asparagine 196, 205 to 207 (RSQ), 277 to 279 (RPE), and glycine 310. Residues aspartate 312 and glutamate 496 each act as proton donor/acceptor in the active site. Position 511 (glutamate 511) interacts with substrate. A disordered region spans residues 540 to 565 (DNVPATHPTVKSATTQPSTKEAQPTP). The segment covering 548-565 (TVKSATTQPSTKEAQPTP) has biased composition (polar residues).

It belongs to the glycosyl hydrolase 37 family. Monomer.

It localises to the periplasm. It carries out the reaction alpha,alpha-trehalose + H2O = alpha-D-glucose + beta-D-glucose. In terms of biological role, provides the cells with the ability to utilize trehalose at high osmolarity by splitting it into glucose molecules that can subsequently be taken up by the phosphotransferase-mediated uptake system. This Shigella flexneri serotype 5b (strain 8401) protein is Periplasmic trehalase.